A 329-amino-acid polypeptide reads, in one-letter code: D-lactate dehydrogenase (329 aa).

NAD(+)-binding positions include 154–155, Asp-174, 205–206, Asn-211, 232–234, and Asp-258; these read KI, CP, and TSR. Residue Arg-234 is part of the active site. Residue Glu-263 is part of the active site. The active-site Proton donor is His-295.

Belongs to the D-isomer specific 2-hydroxyacid dehydrogenase family.

The enzyme catalyses (R)-lactate + NAD(+) = pyruvate + NADH + H(+). Fermentative lactate dehydrogenase. The polypeptide is D-lactate dehydrogenase (ldhA) (Escherichia coli (strain K12)).